We begin with the raw amino-acid sequence, 287 residues long: 4-hydroxybenzoate octaprenyltransferase (287 aa).

The next 7 membrane-spanning stretches (helical) occupy residues 30–50 (ALWI…FALG), 92–112 (IAIA…LNGL), 133–153 (FFAI…PMAF), 158–178 (DTVP…SVAY), 207–227 (VLAI…LGAA), 232–252 (WPYW…YTLI), and 266–286 (HNNW…ALAV).

The protein belongs to the UbiA prenyltransferase family. It depends on Mg(2+) as a cofactor.

It localises to the cell inner membrane. The catalysed reaction is all-trans-octaprenyl diphosphate + 4-hydroxybenzoate = 4-hydroxy-3-(all-trans-octaprenyl)benzoate + diphosphate. It functions in the pathway cofactor biosynthesis; ubiquinone biosynthesis. Functionally, catalyzes the prenylation of para-hydroxybenzoate (PHB) with an all-trans polyprenyl group. Mediates the second step in the final reaction sequence of ubiquinone-8 (UQ-8) biosynthesis, which is the condensation of the polyisoprenoid side chain with PHB, generating the first membrane-bound Q intermediate 3-octaprenyl-4-hydroxybenzoate. This chain is 4-hydroxybenzoate octaprenyltransferase, found in Burkholderia mallei (strain NCTC 10247).